The primary structure comprises 472 residues: Glycogen synthase (472 aa).

Position 16 (Lys16) interacts with ADP-alpha-D-glucose.

Belongs to the glycosyltransferase 1 family. Bacterial/plant glycogen synthase subfamily.

The enzyme catalyses [(1-&gt;4)-alpha-D-glucosyl](n) + ADP-alpha-D-glucose = [(1-&gt;4)-alpha-D-glucosyl](n+1) + ADP + H(+). It functions in the pathway glycan biosynthesis; glycogen biosynthesis. Functionally, synthesizes alpha-1,4-glucan chains using ADP-glucose. The protein is Glycogen synthase of Jannaschia sp. (strain CCS1).